Consider the following 57-residue polypeptide: MSKTVVRKNESLEDALRRFKRSVSKTGTLQEARKREFYEKPSVRRKKKSEAARKRKY.

The tract at residues 35 to 57 (REFYEKPSVRRKKKSEAARKRKY) is disordered. Residues 43-57 (VRRKKKSEAARKRKY) are compositionally biased toward basic residues.

Belongs to the bacterial ribosomal protein bS21 family.

This Bacillus licheniformis (strain ATCC 14580 / DSM 13 / JCM 2505 / CCUG 7422 / NBRC 12200 / NCIMB 9375 / NCTC 10341 / NRRL NRS-1264 / Gibson 46) protein is Small ribosomal subunit protein bS21.